Here is a 658-residue protein sequence, read N- to C-terminus: Carnitine O-palmitoyltransferase 2, mitochondrial (658 aa).

The transit peptide at 1 to 25 (MVPRLLLRAWPRGPAVGPGAPSRPL) directs the protein to the mitochondrion. Over 26 to 178 (SAGSGPGQYL…GLLEPEVFHL (153 aa)) the chain is Mitochondrial matrix. The residue at position 69 (Lys-69) is an N6-succinyllysine. At Lys-79 the chain carries N6-acetyllysine. At Lys-85 the chain carries N6-succinyllysine. Residues 179-208 (NPAKSDTDTFKRLIRFVPSSLSWYGAYLVN) constitute an intramembrane region (note=Mitochondrial inner membrane). Residues 209-658 (AYPLDMSQYF…DALEGKSIKS (450 aa)) lie on the Mitochondrial matrix side of the membrane. N6-acetyllysine; alternate is present on Lys-239. Lys-239 is subject to N6-succinyllysine; alternate. Residue Lys-305 is modified to N6-acetyllysine. Residue His-372 is the Proton acceptor of the active site. Lys-418 is modified (N6-acetyllysine; alternate). An N6-succinyllysine; alternate modification is found at Lys-418. Residues Lys-424 and Lys-439 each carry the N6-succinyllysine modification. 452–464 (GKEFLKKQKLSPD) lines the CoA pocket. (R)-carnitine-binding residues include Tyr-486, Ser-488, and Thr-499. Lys-510 and Lys-544 each carry N6-acetyllysine; alternate. 2 positions are modified to N6-succinyllysine; alternate: Lys-510 and Lys-544.

Belongs to the carnitine/choline acetyltransferase family.

It localises to the mitochondrion inner membrane. The enzyme catalyses (R)-carnitine + hexadecanoyl-CoA = O-hexadecanoyl-(R)-carnitine + CoA. It carries out the reaction octanoyl-CoA + (R)-carnitine = O-octanoyl-(R)-carnitine + CoA. The catalysed reaction is decanoyl-CoA + (R)-carnitine = O-decanoyl-(R)-carnitine + CoA. It catalyses the reaction dodecanoyl-CoA + (R)-carnitine = O-dodecanoyl-R-carnitine + CoA. The enzyme catalyses tetradecanoyl-CoA + (R)-carnitine = O-tetradecanoyl-(R)-carnitine + CoA. It carries out the reaction (R)-carnitine + octadecanoyl-CoA = O-octadecanoyl-(R)-carnitine + CoA. The catalysed reaction is eicosanoyl-CoA + (R)-carnitine = O-eicosanoyl-(R)-carnitine + CoA. It catalyses the reaction (9Z)-tetradecenoyl-CoA + (R)-carnitine = O-(9Z)-tetradecenoyl-(R)-carnitine + CoA. The enzyme catalyses (5Z)-tetradecenoyl-CoA + (R)-carnitine = O-(5Z)-tetradecenoyl-(R)-carnitine + CoA. It carries out the reaction (R)-carnitine + (9Z)-octadecenoyl-CoA = O-(9Z)-octadecenoyl-(R)-carnitine + CoA. The catalysed reaction is 4,8-dimethylnonanoyl-CoA + (R)-carnitine = O-4,8-dimethylnonanoyl-(R)-carnitine + CoA. It functions in the pathway lipid metabolism; fatty acid beta-oxidation. Involved in the intramitochondrial synthesis of acylcarnitines from accumulated acyl-CoA metabolites. Reconverts acylcarnitines back into the respective acyl-CoA esters that can then undergo beta-oxidation, an essential step for the mitochondrial uptake of long-chain fatty acids and their subsequent beta-oxidation in the mitochondrion. Active with medium (C8-C12) and long-chain (C14-C18) acyl-CoA esters. The protein is Carnitine O-palmitoyltransferase 2, mitochondrial (CPT2) of Macaca fascicularis (Crab-eating macaque).